The primary structure comprises 218 residues: Peroxiredoxin-like 2A (218 aa).

The thioredoxin-like fold stretch occupies residues 3-101 (MWSIGVGAVG…DELGVPLYAV (99 aa)). Active-site redox-active residues include C74 and C77.

Belongs to the peroxiredoxin-like PRXL2 family. PRXL2A subfamily. In terms of tissue distribution, expressed in kidney, liver, skin, and brain. Widely expressed with highest levels detected in adipose tissue.

Its subcellular location is the cytoplasm. The protein resides in the secreted. Functionally, involved in redox regulation of the cell. Acts as an antioxidant. Inhibits TNFSF11-induced NFKB1 and JUN activation and osteoclast differentiation. May affect bone resorption and help to maintain bone mass. Acts as a negative regulator of macrophage-mediated inflammation by inhibiting macrophage production of inflammatory cytokines, probably through suppression of the MAPK signaling pathway. In Mus musculus (Mouse), this protein is Peroxiredoxin-like 2A (Prxl2a).